The sequence spans 421 residues: Enolase (421 aa).

Residue Q162 coordinates (2R)-2-phosphoglycerate. Catalysis depends on E204, which acts as the Proton donor. Residues D241, E284, and D311 each contribute to the Mg(2+) site. (2R)-2-phosphoglycerate contacts are provided by K336, R365, S366, and K387. K336 (proton acceptor) is an active-site residue.

Belongs to the enolase family. Mg(2+) is required as a cofactor.

It localises to the cytoplasm. It is found in the secreted. The protein localises to the cell surface. The catalysed reaction is (2R)-2-phosphoglycerate = phosphoenolpyruvate + H2O. It functions in the pathway carbohydrate degradation; glycolysis; pyruvate from D-glyceraldehyde 3-phosphate: step 4/5. Its function is as follows. Catalyzes the reversible conversion of 2-phosphoglycerate (2-PG) into phosphoenolpyruvate (PEP). It is essential for the degradation of carbohydrates via glycolysis. The polypeptide is Enolase (Nitratiruptor sp. (strain SB155-2)).